A 314-amino-acid polypeptide reads, in one-letter code: Methionyl-tRNA formyltransferase (314 aa).

Residue 110-113 (SLLP) participates in (6S)-5,6,7,8-tetrahydrofolate binding.

The protein belongs to the Fmt family.

The enzyme catalyses L-methionyl-tRNA(fMet) + (6R)-10-formyltetrahydrofolate = N-formyl-L-methionyl-tRNA(fMet) + (6S)-5,6,7,8-tetrahydrofolate + H(+). In terms of biological role, attaches a formyl group to the free amino group of methionyl-tRNA(fMet). The formyl group appears to play a dual role in the initiator identity of N-formylmethionyl-tRNA by promoting its recognition by IF2 and preventing the misappropriation of this tRNA by the elongation apparatus. In Levilactobacillus brevis (strain ATCC 367 / BCRC 12310 / CIP 105137 / JCM 1170 / LMG 11437 / NCIMB 947 / NCTC 947) (Lactobacillus brevis), this protein is Methionyl-tRNA formyltransferase.